Reading from the N-terminus, the 108-residue chain is DNA-directed RNA polymerase III subunit RPC10 (108 aa).

Residues C5, C8, C25, C28, C69, and C72 each contribute to the Zn(2+) site. Residues 5–28 form a C4-type zinc finger; the sequence is CPGCGNGLIVEEGQRCHRFACNTC. Residues 65–107 form a TFIIS-type zinc finger; sequence TAEPCPKCEHPRAYFMQLQTRSADEPMTTFYKCCNAQCGHRWR. Positions 88–89 match the Hairpin motif; it reads DE. Residues C98 and C102 each coordinate Zn(2+).

The protein belongs to the archaeal RpoM/eukaryotic RPA12/RPB9/RPC11 RNA polymerase family. In terms of assembly, component of the RNA polymerase III complex consisting of 17 subunits: a ten-subunit horseshoe-shaped catalytic core composed of POLR3A/RPC1, POLR3B/RPC2, POLR1C/RPAC1, POLR1D/RPAC2, POLR3K/RPC10, POLR2E/RPABC1, POLR2F/RPABC2, POLR2H/RPABC3, POLR2K/RPABC4 and POLR2L/RPABC5; a mobile stalk composed of two subunits POLR3H/RPC8 and CRCP/RPC9, protruding from the core and functioning primarily in transcription initiation; and additional subunits homologous to general transcription factors of the RNA polymerase II machinery, POLR3C/RPC3-POLR3F/RPC6-POLR3G/RPC7 heterotrimer required for transcription initiation and POLR3D/RPC4-POLR3E/RPC5 heterodimer involved in both transcription initiation and termination.

The protein resides in the nucleus. Core component of RNA polymerase III (Pol III) which synthesizes small non-coding RNAs using the four ribonucleoside triphosphates as substrates. Can mediate Pol I proofreading of the nascent RNA transcript. Anchors into the Pol III active site to constantly monitor transcription fidelity, cleaves mis-incorporated 5'-ribonucleotides and restarts the transcription process. Once Pol III reaches the poly(dT) termination signal, can induce Pol III clamp opening and transcription termination. Pol III plays an important role in sensing and limiting infection by intracellular bacteria and DNA viruses. Acts as a nuclear and cytosolic DNA sensor involved in innate immune response. Can sense non-self dsDNA that serves as template for transcription into dsRNA. The non-self RNA polymerase III transcripts, such as Epstein-Barr virus-encoded RNAs (EBERs) induce type I interferon and NF-kappa-B through the RIG-I pathway. The protein is DNA-directed RNA polymerase III subunit RPC10 of Mus musculus (Mouse).